Consider the following 283-residue polypeptide: Protein/nucleic acid deglycase HchA (283 aa).

H86, E91, and H123 together coordinate Zn(2+). Catalysis depends on C185, which acts as the Nucleophile.

This sequence belongs to the peptidase C56 family. HchA subfamily. In terms of assembly, homodimer.

It localises to the cytoplasm. It catalyses the reaction N(omega)-(1-hydroxy-2-oxopropyl)-L-arginyl-[protein] + H2O = lactate + L-arginyl-[protein] + H(+). The catalysed reaction is N(6)-(1-hydroxy-2-oxopropyl)-L-lysyl-[protein] + H2O = lactate + L-lysyl-[protein] + H(+). The enzyme catalyses S-(1-hydroxy-2-oxopropyl)-L-cysteinyl-[protein] + H2O = lactate + L-cysteinyl-[protein] + H(+). It carries out the reaction N(omega)-(1-hydroxy-2-oxoethyl)-L-arginyl-[protein] + H2O = L-arginyl-[protein] + glycolate + H(+). It catalyses the reaction N(6)-(1-hydroxy-2-oxoethyl)-L-lysyl-[protein] + H2O = glycolate + L-lysyl-[protein] + H(+). The catalysed reaction is S-(1-hydroxy-2-oxoethyl)-L-cysteinyl-[protein] + H2O = glycolate + L-cysteinyl-[protein] + H(+). The enzyme catalyses N(2)-(1-hydroxy-2-oxopropyl)-dGTP + H2O = lactate + dGTP + H(+). It carries out the reaction N(2)-(1-hydroxy-2-oxopropyl)-GTP + H2O = lactate + GTP + H(+). It catalyses the reaction N(2)-(1-hydroxy-2-oxopropyl)-GDP + H2O = lactate + GDP + H(+). The catalysed reaction is N(2)-(1-hydroxy-2-oxopropyl)-GMP + H2O = lactate + GMP + H(+). The enzyme catalyses N(2)-(1-hydroxy-2-oxoethyl)-dGTP + H2O = dGTP + glycolate + H(+). It carries out the reaction N(2)-(1-hydroxy-2-oxoethyl)-GTP + H2O = glycolate + GTP + H(+). It catalyses the reaction N(2)-(1-hydroxy-2-oxoethyl)-GDP + H2O = glycolate + GDP + H(+). The catalysed reaction is N(2)-(1-hydroxy-2-oxoethyl)-GMP + H2O = glycolate + GMP + H(+). The enzyme catalyses an N(2)-(1-hydroxy-2-oxopropyl)-guanosine in RNA + H2O = a guanosine in RNA + lactate + H(+). It carries out the reaction an N(2)-(1-hydroxy-2-oxopropyl)-2'-deoxyguanosine in DNA + H2O = a 2'-deoxyguanosine in DNA + lactate + H(+). It catalyses the reaction an N(2)-(1-hydroxy-2-oxoethyl)-guanosine in RNA + H2O = a guanosine in RNA + glycolate + H(+). The catalysed reaction is an N(2)-(1-hydroxy-2-oxoethyl)-2'-deoxyguanosine in DNA + H2O = a 2'-deoxyguanosine in DNA + glycolate + H(+). Protein and nucleotide deglycase that catalyzes the deglycation of the Maillard adducts formed between amino groups of proteins or nucleotides and reactive carbonyl groups of glyoxals. Thus, functions as a protein deglycase that repairs methylglyoxal- and glyoxal-glycated proteins, and releases repaired proteins and lactate or glycolate, respectively. Deglycates cysteine, arginine and lysine residues in proteins, and thus reactivates these proteins by reversing glycation by glyoxals. Acts on early glycation intermediates (hemithioacetals and aminocarbinols), preventing the formation of Schiff bases and advanced glycation endproducts (AGE). Also functions as a nucleotide deglycase able to repair glycated guanine in the free nucleotide pool (GTP, GDP, GMP, dGTP) and in DNA and RNA. Is thus involved in a major nucleotide repair system named guanine glycation repair (GG repair), dedicated to reversing methylglyoxal and glyoxal damage via nucleotide sanitization and direct nucleic acid repair. Plays an important role in protecting cells from carbonyl stress. The polypeptide is Protein/nucleic acid deglycase HchA (Shigella sonnei (strain Ss046)).